A 295-amino-acid chain; its full sequence is MKSRFENALASAPESLSRHLAPIILAADFDASLSTVQFDELLKQTGMTDNQLRVALLPFAAAYSYAPISEFYVGAIVRGLSGALYFGANMEFDGVQLGQTVHAEQSAISHAWMKGEQGLSDITINFSPCGHCRQFMNELSSAKELKIQLPEREEKKLHDYLPDSFGPSDLGIESALMSQVHHGFATEDDDALMQRAVEAMNRSHAPYTHNLSGVALQTESGRVYLGAYAENAAFNPSLPPLQVALIQLLLAGERFENIQSAALVESHKGKISHLACTQSTLEALNPDIPVSYLSL.

CMP/dCMP-type deaminase domains lie at 48–168 (TDNQ…FGPS) and 187–295 (EDDD…YLSL). Residue 89–91 (NME) coordinates substrate. Histidine 102 lines the Zn(2+) pocket. Glutamate 104 serves as the catalytic Proton donor. Positions 129 and 132 each coordinate Zn(2+).

This sequence belongs to the cytidine and deoxycytidylate deaminase family. As to quaternary structure, homodimer. Zn(2+) serves as cofactor.

It catalyses the reaction cytidine + H2O + H(+) = uridine + NH4(+). It carries out the reaction 2'-deoxycytidine + H2O + H(+) = 2'-deoxyuridine + NH4(+). This enzyme scavenges exogenous and endogenous cytidine and 2'-deoxycytidine for UMP synthesis. The chain is Cytidine deaminase from Vibrio vulnificus (strain CMCP6).